The sequence spans 236 residues: Probable 6-phosphogluconolactonase (236 aa).

The protein belongs to the glucosamine/galactosamine-6-phosphate isomerase family. 6-phosphogluconolactonase subfamily.

It catalyses the reaction 6-phospho-D-glucono-1,5-lactone + H2O = 6-phospho-D-gluconate + H(+). It participates in carbohydrate degradation; pentose phosphate pathway; D-ribulose 5-phosphate from D-glucose 6-phosphate (oxidative stage): step 2/3. Hydrolysis of 6-phosphogluconolactone to 6-phosphogluconate. This Dictyostelium discoideum (Social amoeba) protein is Probable 6-phosphogluconolactonase (pgl).